The sequence spans 414 residues: Serine/threonine transporter SstT (414 aa).

The next 8 membrane-spanning stretches (helical) occupy residues 22-42 (GLVL…TIGF), 54-74 (IFVK…VMAA), 89-109 (IIVL…IAGF), 148-168 (AIFK…GLAL), 189-209 (IVHV…AETL), 223-243 (LLAV…PILV), 305-325 (MAGA…TLGL), and 337-357 (IVAA…LLLI).

Belongs to the dicarboxylate/amino acid:cation symporter (DAACS) (TC 2.A.23) family.

The protein resides in the cell inner membrane. The catalysed reaction is L-serine(in) + Na(+)(in) = L-serine(out) + Na(+)(out). It catalyses the reaction L-threonine(in) + Na(+)(in) = L-threonine(out) + Na(+)(out). Its function is as follows. Involved in the import of serine and threonine into the cell, with the concomitant import of sodium (symport system). The polypeptide is Serine/threonine transporter SstT (Haemophilus influenzae (strain 86-028NP)).